We begin with the raw amino-acid sequence, 335 residues long: Pyridoxal 5'-phosphate synthase subunit PdxS (335 aa).

D30 is a D-ribose 5-phosphate binding site. Catalysis depends on K87, which acts as the Schiff-base intermediate with D-ribose 5-phosphate. G159 contacts D-ribose 5-phosphate. R171 contributes to the D-glyceraldehyde 3-phosphate binding site. D-ribose 5-phosphate contacts are provided by residues G257 and 278–279 (GS).

It belongs to the PdxS/SNZ family. As to quaternary structure, in the presence of PdxT, forms a dodecamer of heterodimers.

It catalyses the reaction aldehydo-D-ribose 5-phosphate + D-glyceraldehyde 3-phosphate + L-glutamine = pyridoxal 5'-phosphate + L-glutamate + phosphate + 3 H2O + H(+). Its pathway is cofactor biosynthesis; pyridoxal 5'-phosphate biosynthesis. Catalyzes the formation of pyridoxal 5'-phosphate from ribose 5-phosphate (RBP), glyceraldehyde 3-phosphate (G3P) and ammonia. The ammonia is provided by the PdxT subunit. Can also use ribulose 5-phosphate and dihydroxyacetone phosphate as substrates, resulting from enzyme-catalyzed isomerization of RBP and G3P, respectively. The protein is Pyridoxal 5'-phosphate synthase subunit PdxS of Thermococcus kodakarensis (strain ATCC BAA-918 / JCM 12380 / KOD1) (Pyrococcus kodakaraensis (strain KOD1)).